The primary structure comprises 234 residues: Leucyl/phenylalanyl-tRNA--protein transferase (234 aa).

The protein belongs to the L/F-transferase family.

It is found in the cytoplasm. The enzyme catalyses N-terminal L-lysyl-[protein] + L-leucyl-tRNA(Leu) = N-terminal L-leucyl-L-lysyl-[protein] + tRNA(Leu) + H(+). It carries out the reaction N-terminal L-arginyl-[protein] + L-leucyl-tRNA(Leu) = N-terminal L-leucyl-L-arginyl-[protein] + tRNA(Leu) + H(+). The catalysed reaction is L-phenylalanyl-tRNA(Phe) + an N-terminal L-alpha-aminoacyl-[protein] = an N-terminal L-phenylalanyl-L-alpha-aminoacyl-[protein] + tRNA(Phe). Functionally, functions in the N-end rule pathway of protein degradation where it conjugates Leu, Phe and, less efficiently, Met from aminoacyl-tRNAs to the N-termini of proteins containing an N-terminal arginine or lysine. This is Leucyl/phenylalanyl-tRNA--protein transferase from Myxococcus xanthus (strain DK1622).